Reading from the N-terminus, the 253-residue chain is Diphthine synthase (253 aa).

Residues Asp-83, Leu-86, 111–112 (SI), Leu-163, and Leu-205 each bind S-adenosyl-L-methionine.

Belongs to the diphthine synthase family. In terms of assembly, homodimer.

It carries out the reaction 2-[(3S)-amino-3-carboxypropyl]-L-histidyl-[translation elongation factor 2] + 3 S-adenosyl-L-methionine = diphthine-[translation elongation factor 2] + 3 S-adenosyl-L-homocysteine + 3 H(+). The protein operates within protein modification; peptidyl-diphthamide biosynthesis. Functionally, S-adenosyl-L-methionine-dependent methyltransferase that catalyzes the trimethylation of the amino group of the modified target histidine residue in translation elongation factor 2 (EF-2), to form an intermediate called diphthine. The three successive methylation reactions represent the second step of diphthamide biosynthesis. This Pyrobaculum neutrophilum (strain DSM 2338 / JCM 9278 / NBRC 100436 / V24Sta) (Thermoproteus neutrophilus) protein is Diphthine synthase.